A 312-amino-acid chain; its full sequence is NADH-ubiquinone oxidoreductase chain 1 (312 aa).

8 helical membrane-spanning segments follow: residues 3 to 23, 37 to 57, 69 to 89, 104 to 124, 141 to 161, 173 to 193, 233 to 253, and 279 to 299; these read FMELLLFVLSMLLAVAFLTVA, PNAVGYYGVLMAMADAAKLLL, FMLIMSPMMTLMSALLCWAMI, FMLALAMGSVGVFGSLFAGWA, LISYELVLTTVILICMLLTGT, SMWLVVPLLPLSLMWFMGCVA, MLFYSTLTAILFFGGGTGLIL, and LIAMCWIVFLPLLFALALFMP.

Belongs to the complex I subunit 1 family.

It localises to the mitochondrion inner membrane. The catalysed reaction is a ubiquinone + NADH + 5 H(+)(in) = a ubiquinol + NAD(+) + 4 H(+)(out). Its function is as follows. Core subunit of the mitochondrial membrane respiratory chain NADH dehydrogenase (Complex I) that is believed to belong to the minimal assembly required for catalysis. Complex I functions in the transfer of electrons from NADH to the respiratory chain. The immediate electron acceptor for the enzyme is believed to be ubiquinone. The polypeptide is NADH-ubiquinone oxidoreductase chain 1 (ND1) (Debaryomyces hansenii (strain ATCC 36239 / CBS 767 / BCRC 21394 / JCM 1990 / NBRC 0083 / IGC 2968) (Yeast)).